The sequence spans 270 residues: uncharacterized protein (270 aa).

Positions 43-112 (CTANDIKRKY…REEYDRFGIH (70 aa)) constitute a J domain. The segment at 239–270 (EQSKQIPTQQKPSSLPPPERALPAPTMPTPSS) is disordered. Positions 242–251 (KQIPTQQKPS) are enriched in polar residues. The span at 252-270 (SLPPPERALPAPTMPTPSS) shows a compositional bias: pro residues.

This is an uncharacterized protein from Schizosaccharomyces pombe (strain 972 / ATCC 24843) (Fission yeast).